Reading from the N-terminus, the 349-residue chain is MKKTPLYEAHLRLGARMVDFAGYLLPLQYTSIVEEHLAVRRAVGVFDVSHMGEFLVRGEEALAFLQWATANDAGKLKVGRAQYSMLPNERGGVVDDIYLYRLGEEEYLMVVNAANIAKDLAHLQALAKGFRVELEDASERTALLALQGPKAQALLQGLVDVDLSTKRKNDVFPARVAGRPARLARTGYTGEDGFELFLAPEDAEPVFLALVEAGAKPAGLGARDSLRLEAGFPLYGHELTEETNPLCTPWAWVVKKEKAFLGKEAMLAQACRERLVGLVLEGGIPREGYRVLSGGCPVGRVTSGGYSPLLQRGIALAYVEEGAEGPFQVEVRGRAVPAALSPLPFVPLK.

It belongs to the GcvT family. The glycine cleavage system is composed of four proteins: P, T, L and H.

It catalyses the reaction N(6)-[(R)-S(8)-aminomethyldihydrolipoyl]-L-lysyl-[protein] + (6S)-5,6,7,8-tetrahydrofolate = N(6)-[(R)-dihydrolipoyl]-L-lysyl-[protein] + (6R)-5,10-methylene-5,6,7,8-tetrahydrofolate + NH4(+). Functionally, the glycine cleavage system catalyzes the degradation of glycine. This is Aminomethyltransferase from Thermus thermophilus (strain ATCC BAA-163 / DSM 7039 / HB27).